A 138-amino-acid polypeptide reads, in one-letter code: Large ribosomal subunit protein bL19 (138 aa).

The protein belongs to the bacterial ribosomal protein bL19 family.

This protein is located at the 30S-50S ribosomal subunit interface and may play a role in the structure and function of the aminoacyl-tRNA binding site. This Rickettsia canadensis (strain McKiel) protein is Large ribosomal subunit protein bL19.